Consider the following 507-residue polypeptide: Alpha-amylase 2 (507 aa).

A signal peptide spans 1 to 20; sequence MKFATILSTTALALSSLVAS. Cysteines 62 and 70 form a disulfide. Substrate is bound at residue W115. Position 153 (N153) interacts with Ca(2+). H154 contacts substrate. C182 and C196 are oxidised to a cystine. Ca(2+)-binding residues include E194 and D207. N229 carries an N-linked (GlcNAc...) asparagine glycan. A substrate-binding site is contributed by R236. Ca(2+) is bound by residues D238, H242, and E262. The Nucleophile role is filled by D238. Substrate is bound at residue 241 to 242; that stretch reads KH. The Proton donor role is filled by E262. G266 contacts substrate. C272 and C315 are oxidised to a cystine. 2 residues coordinate substrate: D329 and R376. A disulfide bridge connects residues C470 and C505.

The protein belongs to the glycosyl hydrolase 13 family. The cofactor is Ca(2+).

The enzyme catalyses Endohydrolysis of (1-&gt;4)-alpha-D-glucosidic linkages in polysaccharides containing three or more (1-&gt;4)-alpha-linked D-glucose units.. The polypeptide is Alpha-amylase 2 (SWA2) (Schwanniomyces occidentalis (Yeast)).